A 373-amino-acid polypeptide reads, in one-letter code: Thyroid hormone receptor beta-A (373 aa).

Residues 1-18 are modulating; sequence MPSSMSGYIPSYLDKDEL. 2 consecutive NR C4-type zinc fingers follow at residues 19-39 and 57-81; these read CVVC…CEGC and CKYE…FKKC. The nuclear receptor DNA-binding region spans 19 to 93; the sequence is CVVCGDKATG…VGMATDLVLD (75 aa). In terms of domain architecture, NR LBD spans 129 to 373; the sequence is EEWELIQVVT…PPLFLEVFED (245 aa).

It belongs to the nuclear hormone receptor family. NR1 subfamily.

Its subcellular location is the nucleus. Functionally, high affinity receptor for triiodothyronine (T3). The polypeptide is Thyroid hormone receptor beta-A (thrb-a) (Xenopus laevis (African clawed frog)).